The chain runs to 87 residues: U3-theraphotoxin-Hhn1q (87 aa).

A signal peptide spans 1–24 (MVNMKASMFLTFAGLVLLFVVCYA). Residues 25 to 52 (SESEEKEFPKEMLSSIFAVDNDFKQEER) constitute a propeptide that is removed on maturation. 3 cysteine pairs are disulfide-bonded: Cys54-Cys67, Cys61-Cys72, and Cys66-Cys79.

The protein belongs to the neurotoxin 10 (Hwtx-1) family. 51 (Hntx-8) subfamily. Hntx-8 sub-subfamily. As to expression, expressed by the venom gland.

The protein localises to the secreted. Its function is as follows. Ion channel inhibitor. In Cyriopagopus hainanus (Chinese bird spider), this protein is U3-theraphotoxin-Hhn1q.